The sequence spans 557 residues: Putative UDP-glucuronate:xylan alpha-glucuronosyltransferase 4 (557 aa).

The helical; Signal-anchor for type II membrane protein transmembrane segment at 11–31 (KIFMIYLILVSLSLLGLILPF) threads the bilayer. Aspartate 365 and aspartate 367 together coordinate Mn(2+). Substrate-binding positions include 365–367 (DAD), 394–396 (NSG), 421–425 (NGGDQ), and 466–471 (HYLGLK). Histidine 466 is a binding site for Mn(2+).

It belongs to the glycosyltransferase 8 family. Glycogenin subfamily. Mn(2+) serves as cofactor.

The protein resides in the golgi apparatus membrane. May be involved in the substitutions of the xylan backbone in stem glucuronoxylan. In Arabidopsis thaliana (Mouse-ear cress), this protein is Putative UDP-glucuronate:xylan alpha-glucuronosyltransferase 4 (GUX4).